Here is a 487-residue protein sequence, read N- to C-terminus: L-tartrate/succinate antiporter (487 aa).

Transmembrane regions (helical) follow at residues 10–30, 33–53, 54–74, 93–113, 137–157, 189–209, 230–250, 292–312, 313–333, 340–360, 370–390, 393–413, 418–438, and 465–485; these read YLAP…AGLE, TWLY…EPVP, GAVV…WLLF, WAVS…FMFG, TLFL…VTPS, IGSY…AIFL, LSWG…VLLV, LMVG…AAMV, GYSV…DIVS, VFFW…TGFI, SLSG…FYLL, FFAS…AAAL, IPLP…SILT, and IFGL…MPVV.

Belongs to the SLC13A/DASS transporter (TC 2.A.47) family. DIT1 subfamily.

Its subcellular location is the cell inner membrane. The catalysed reaction is (2R,3R)-tartrate(out) + succinate(in) = (2R,3R)-tartrate(in) + succinate(out). Catalyzes the uptake of tartrate in exchange for intracellular succinate. Essential for anaerobic L-tartrate fermentation. The protein is L-tartrate/succinate antiporter (ttdT) of Shigella dysenteriae serotype 1 (strain Sd197).